The chain runs to 323 residues: Fructose-1,6-bisphosphatase class 1 (323 aa).

Residues Glu-88, Asp-107, Leu-109, and Asp-110 each contribute to the Mg(2+) site. Substrate is bound by residues 110-113 (DGSS) and Asn-200. Glu-272 lines the Mg(2+) pocket.

It belongs to the FBPase class 1 family. As to quaternary structure, homotetramer. It depends on Mg(2+) as a cofactor.

Its subcellular location is the cytoplasm. It catalyses the reaction beta-D-fructose 1,6-bisphosphate + H2O = beta-D-fructose 6-phosphate + phosphate. The protein operates within carbohydrate biosynthesis; gluconeogenesis. The protein is Fructose-1,6-bisphosphatase class 1 of Acinetobacter baumannii (strain ATCC 17978 / DSM 105126 / CIP 53.77 / LMG 1025 / NCDC KC755 / 5377).